A 719-amino-acid chain; its full sequence is Transcription factor E4F1 (719 aa).

The required for ubiquitin ligase activity stretch occupies residues 20–63 (NIITIQTTLGDEDEDIHKCGKCLAEFSALDAFIQHKLSRSCKRT). Residues 59 to 125 (SCKRTQDPQT…SEDESSSPSK (67 aa)) are disordered. Basic and acidic residues predominate over residues 98-109 (EKQDAKVASGDK). A mediates dimerization and DNA-binding region spans residues 128–207 (WKLNTEGRYV…GLAFRESGAL (80 aa)). 2 consecutive C2H2-type zinc fingers follow at residues 136 to 158 (YVCDICAKTFKTTNILRTHMFTH) and 164 to 186 (FVCEMCETAFRTKGSLIRHKRRH). The C2H2-type 3; degenerate zinc finger occupies 192–216 (YRCNQCGLAFRESGALTRHLKSLTP). 5 C2H2-type zinc fingers span residues 365–387 (YKCPHCERMFKTLNYLRVHVKGH), 393–415 (FKCLTCQKEFLTGYVLKKHMETH), 421–443 (YKCGECGKQFKAIGHVREHMRAH), 449–471 (YHCSFCDKSYKTKNALQVHHRTH), and 477–499 (YVCQHCSRGFREKSALVRHIRHH). Residues 505-527 (FKCSKCGRGFAEHGTLNRHLRAK) form a C2H2-type 9; degenerate zinc finger.

The protein resides in the nucleus. The protein localises to the nucleoplasm. It localises to the cytoplasm. It catalyses the reaction S-ubiquitinyl-[E2 ubiquitin-conjugating enzyme]-L-cysteine + [acceptor protein]-L-lysine = [E2 ubiquitin-conjugating enzyme]-L-cysteine + N(6)-ubiquitinyl-[acceptor protein]-L-lysine.. Its pathway is protein modification; protein ubiquitination. Functionally, may function as a transcriptional repressor. May also function as a ubiquitin ligase. Functions in cell survival and proliferation through control of the cell cycle. This is Transcription factor E4F1 (e4f1) from Danio rerio (Zebrafish).